Consider the following 75-residue polypeptide: UPF0270 protein Avin_35000 (75 aa).

This sequence belongs to the UPF0270 family.

This is UPF0270 protein Avin_35000 from Azotobacter vinelandii (strain DJ / ATCC BAA-1303).